The sequence spans 521 residues: NAD(P)H-quinone oxidoreductase subunit 2 (521 aa).

Transmembrane regions (helical) follow at residues 14-34 (VILP…TDLI), 42-62 (LTPA…TLQW), 79-99 (LSIV…LLSI), 109-129 (LGEF…LSGA), 132-152 (LVTI…LTGY), 167-187 (LLIG…LYGL), 207-227 (LALL…ISAV), 241-261 (PTPI…ALAI), 275-295 (WHFV…VVAL), 303-323 (LLAY…IAGT), 331-351 (VYYL…VILF), 375-395 (LGLS…GFFG), 397-417 (LYLF…LALI), and 463-483 (AGLV…NPLF).

Belongs to the complex I subunit 2 family. As to quaternary structure, NDH-1 can be composed of about 15 different subunits; different subcomplexes with different compositions have been identified which probably have different functions.

Its subcellular location is the cellular thylakoid membrane. The enzyme catalyses a plastoquinone + NADH + (n+1) H(+)(in) = a plastoquinol + NAD(+) + n H(+)(out). It carries out the reaction a plastoquinone + NADPH + (n+1) H(+)(in) = a plastoquinol + NADP(+) + n H(+)(out). NDH-1 shuttles electrons from an unknown electron donor, via FMN and iron-sulfur (Fe-S) centers, to quinones in the respiratory and/or the photosynthetic chain. The immediate electron acceptor for the enzyme in this species is believed to be plastoquinone. Couples the redox reaction to proton translocation, and thus conserves the redox energy in a proton gradient. Cyanobacterial NDH-1 also plays a role in inorganic carbon-concentration. The chain is NAD(P)H-quinone oxidoreductase subunit 2 from Synechococcus elongatus (strain ATCC 33912 / PCC 7942 / FACHB-805) (Anacystis nidulans R2).